We begin with the raw amino-acid sequence, 281 residues long: Merozoite surface protein 1 (281 aa).

The first 19 residues, 1–19 (MKIIFFLCSFLFFIINTQC), serve as a signal peptide directing secretion. The segment covering 63-100 (ASAQSGASAQSGASAQSGASAQSGTSGPSGPSGTSPSS) has biased composition (low complexity). The disordered stretch occupies residues 63-126 (ASAQSGASAQ…PADASDSDAK (64 aa)). The segment covering 101–110 (RSNTLPRSNT) has biased composition (polar residues). N109 carries an N-linked (GlcNAc...) asparagine glycan. Residues 111–120 (SSGASPPADA) show a composition bias toward low complexity. N-linked (GlcNAc...) asparagine glycosylation occurs at N248.

As to quaternary structure, forms a complex composed of subunits p83, p30, p38, and p42 which remain non-covalently associated; the complex is formed at the merozoite surface prior to egress from host erythrocytes. Forms a complex composed of processed MSP1 subunits, MSP6 subunit p36 and MSP7; the complex is formed at the merozoite surface prior to egress from host erythrocytes. Within the complex, interacts (via subunit p38) with MSP6 subunit p36 and (via subunits p83, p30 and p38) with MSP7 (via subunit p22). Forms a complex composed of MSP1, MSP6, DBLMSP1 and DBLMSP2. Within the complex, interacts (via subunit p38) with DBLMSP1 and DBLMSP2. Forms a complex composed of MSP1, and rhoptry proteins RhopH3, RAP1 and CLAG9/RhopH3. Within the complex, interacts (via subunits p42 and p19) with RhopH3 (via C-terminus). Forms a complex composed of MSP1, MSP6, MSP7, MSP9 and MSP3; within the complex, MSP6 and MSP9 mediate the binding to the host erythrocyte. Interacts (via subunits p19 and p42) with MSP9; the interaction is direct; MSP1 subunits p19 or p42, and MSP9 form a co-ligand complex that interacts with host SLC4A1/Band 3 protein. May interact with PFD6. Interacts with host spectrin. The p190 precursor is cleaved by SUB1 prior to merozoite egress into 4 subunits p83, p30, p38, and p42 which remain non-covalently associated. SUB1-mediated proteolytic cleavage occurs in an orderly manner; the first cleavage occurs at the p30/p38 site, followed by cleavage at the p83/p30 site, the last cleavage occurs at the p38/p42 site. The order of cleavage is essential for parasite viability. SUB1-mediated processing is essential for merozoite egress. In a second processing step during erythrocyte invasion, p42 is cleaved by SUB2 into p33 and p19; the latter remains attached to the merozoite surface via its GPI-anchor and is endocytosed during the subsequent ring stage.

It localises to the cell membrane. It is found in the secreted. In terms of biological role, during the asexual blood stage, involved in merozoite egress from host erythrocytes possibly via its interaction with the host cytoskeleton protein spectrin resulting in the destabilization of the host cytoskeleton and thus leading to erythrocyte cell membrane rupture. Involved in the binding to host erythrocytes and is required for host erythrocyte invasion. The sequence is that of Merozoite surface protein 1 from Plasmodium falciparum (isolate NF7 / Ghana).